The chain runs to 256 residues: Homeobox-leucine zipper protein HOX18 (256 aa).

The disordered stretch occupies residues Y52–L117. A compositionally biased stretch (gly residues) spans D102 to G112. The segment at residues G112 to Q171 is a DNA-binding region (homeobox). A leucine-zipper region spans residues K170–Q214.

Belongs to the HD-ZIP homeobox family. Class II subfamily. As to expression, expressed in roots, leaf sheaths and blades and panicles.

Its subcellular location is the nucleus. Its function is as follows. Probable transcription factor. The polypeptide is Homeobox-leucine zipper protein HOX18 (HOX18) (Oryza sativa subsp. indica (Rice)).